The chain runs to 547 residues: Zinc metalloproteinase-disintegrin-like BjussuMP-1 (547 aa).

Residues 1–133 constitute a propeptide that is removed on maturation; sequence EFKVNGEPVV…KKASKLVVTA (133 aa). The region spanning 141 to 337 is the Peptidase M12B domain; sequence RYVEIVVVVD…HNPQCILNEP (197 aa). Positions 144 and 228 each coordinate Ca(2+). Disulfide bonds link cysteine 252/cysteine 332, cysteine 292/cysteine 316, and cysteine 294/cysteine 299. Histidine 277 contributes to the Zn(2+) binding site. Residue glutamate 278 is part of the active site. Residues histidine 281 and histidine 287 each contribute to the Zn(2+) site. Ca(2+) is bound by residues cysteine 332, asparagine 335, valine 341, asparagine 344, leucine 346, glutamate 348, glutamate 351, and aspartate 354. Residues 339–421 enclose the Disintegrin domain; it reads LTVSGNELLE…DCPRNRFHRN (83 aa). Intrachain disulfides connect cysteine 353–cysteine 363, cysteine 362–cysteine 385, cysteine 376–cysteine 382, cysteine 381–cysteine 406, cysteine 394–cysteine 413, cysteine 425–cysteine 437, cysteine 444–cysteine 494, cysteine 459–cysteine 501, cysteine 472–cysteine 482, cysteine 489–cysteine 526, and cysteine 520–cysteine 531. Asparagine 451 is a glycosylation site (N-linked (GlcNAc...) asparagine). Asparagine 504 is a glycosylation site (N-linked (GlcNAc...) asparagine).

This sequence belongs to the venom metalloproteinase (M12B) family. P-III subfamily. P-IIIa sub-subfamily. As to quaternary structure, monomer. It depends on Zn(2+) as a cofactor. Expressed by the venom gland.

It is found in the secreted. Its activity is regulated as follows. Completely inhibited by EDTA, EGTA, 1,10-phenanthroline, and partially by beta-mercaptoethanol. Is not inhibited by aprotinin and leupeptin. Functionally, this protein is a zinc metalloprotease from snake venom that causes hemorrhage in mice after intradermal injection. It inhibits platelet aggregation induced by collagen and ADP. Has moderate edema activity, but no myotoxic activity. It hydrolyzes the Aalpha-chain and more slowly the Bbeta-chain of fibrinogen, without affecting the gamma-chains. It also shows proteolytic activity on casein. It is unable to clot plasma. It also shows bactericidal activity against E.coli and S.aureus. This Bothrops jararacussu (Jararacussu) protein is Zinc metalloproteinase-disintegrin-like BjussuMP-1.